The chain runs to 52 residues: UPF0181 protein CGSHiGG_01050 (52 aa).

Belongs to the UPF0181 family.

In Haemophilus influenzae (strain PittGG), this protein is UPF0181 protein CGSHiGG_01050.